The chain runs to 304 residues: Endonuclease III-like protein 1 (304 aa).

The N-terminal 22 residues, 1-22 (MTALSARMLTRSRSLGPGAGPR), are a transit peptide targeting the mitochondrion. The disordered stretch occupies residues 1 to 72 (MTALSARMLT…SDSEKGEGAE (72 aa)). Over residues 23–42 (GCREEPGPLRRREAAAEARK) the composition is skewed to basic and acidic residues. A Bipartite nuclear localization signal motif is present at residues 28-52 (PGPLRRREAAAEARKSHSPVKRPRK). Residues 43–55 (SHSPVKRPRKAQR) show a composition bias toward basic residues. A phosphoserine mark is found at serine 63 and serine 65. Residues 191–215 (HYGGDIPASVAELVALPGVGPKMAH) form the HhH domain. The active-site Nucleophile; for N-glycosylase activity is lysine 212. Positions 282, 289, 292, and 298 each coordinate [4Fe-4S] cluster.

It belongs to the Nth/MutY family. Interacts with YBX1. Interacts with ERCC5/XPG; the interaction stimulates NTHL1 activity and NTHL1 binding to its DNA substrate. It depends on [4Fe-4S] cluster as a cofactor. Ubiquitinated by TRIM26; leading to proteasomal degradation. As to expression, widely expressed with highest levels in heart and lowest levels in lung and liver.

It is found in the nucleus. The protein localises to the mitochondrion. It carries out the reaction 2'-deoxyribonucleotide-(2'-deoxyribose 5'-phosphate)-2'-deoxyribonucleotide-DNA = a 3'-end 2'-deoxyribonucleotide-(2,3-dehydro-2,3-deoxyribose 5'-phosphate)-DNA + a 5'-end 5'-phospho-2'-deoxyribonucleoside-DNA + H(+). APE1 displaces NTHL1 from the N-glycosylase-generated AP site in DNA, thereby increasing the turnover of the DNA N-glycosylase activity. AP lyase activity is stimulated by YBX1. ERCC5/XPG stimulates NTHL1 activity and NTHL1 binding to its DNA substrate. Its function is as follows. Bifunctional DNA N-glycosylase with associated apurinic/apyrimidinic (AP) lyase function that catalyzes the first step in base excision repair (BER), the primary repair pathway for the repair of oxidative DNA damage. The DNA N-glycosylase activity releases the damaged DNA base from DNA by cleaving the N-glycosidic bond, leaving an AP site. The AP-lyase activity cleaves the phosphodiester bond 3' to the AP site by a beta-elimination. Primarily recognizes and repairs oxidative base damage of pyrimidines. Also has 8-oxo-7,8-dihydroguanine (8-oxoG) DNA glycosylase activity. Acts preferentially on DNA damage opposite guanine residues in DNA. Is able to process lesions in nucleosomes without requiring or inducing nucleosome disruption. The sequence is that of Endonuclease III-like protein 1 from Homo sapiens (Human).